The primary structure comprises 539 residues: CTP synthase (539 aa).

The tract at residues 1–267 (MTKYIFVTGG…DQKVCDFLHI (267 aa)) is amidoligase domain. Ser-13 is a CTP binding site. Residue Ser-13 participates in UTP binding. 14 to 19 (SLGKGI) provides a ligand contact to ATP. Position 54 (Tyr-54) interacts with L-glutamine. ATP is bound at residue Asp-71. Positions 71 and 141 each coordinate Mg(2+). CTP is bound by residues 148–150 (DME), 188–193 (KTKPTQ), and Lys-224. UTP contacts are provided by residues 188-193 (KTKPTQ) and Lys-224. The region spanning 294–537 (KITLVGKYVE…IGAASGLPEQ (244 aa)) is the Glutamine amidotransferase type-1 domain. Gly-356 is a binding site for L-glutamine. Cys-383 serves as the catalytic Nucleophile; for glutamine hydrolysis. L-glutamine-binding positions include 384 to 387 (LGMQ), Glu-407, and Arg-465. Catalysis depends on residues His-510 and Glu-512.

The protein belongs to the CTP synthase family. Homotetramer.

The enzyme catalyses UTP + L-glutamine + ATP + H2O = CTP + L-glutamate + ADP + phosphate + 2 H(+). It catalyses the reaction L-glutamine + H2O = L-glutamate + NH4(+). The catalysed reaction is UTP + NH4(+) + ATP = CTP + ADP + phosphate + 2 H(+). It participates in pyrimidine metabolism; CTP biosynthesis via de novo pathway; CTP from UDP: step 2/2. With respect to regulation, allosterically activated by GTP, when glutamine is the substrate; GTP has no effect on the reaction when ammonia is the substrate. The allosteric effector GTP functions by stabilizing the protein conformation that binds the tetrahedral intermediate(s) formed during glutamine hydrolysis. Inhibited by the product CTP, via allosteric rather than competitive inhibition. Functionally, catalyzes the ATP-dependent amination of UTP to CTP with either L-glutamine or ammonia as the source of nitrogen. Regulates intracellular CTP levels through interactions with the four ribonucleotide triphosphates. This chain is CTP synthase, found in Lactobacillus helveticus (strain DPC 4571).